Reading from the N-terminus, the 299-residue chain is Ribosomal protein L11 methyltransferase (299 aa).

Thr140, Gly161, Asp183, and Asn232 together coordinate S-adenosyl-L-methionine.

The protein belongs to the methyltransferase superfamily. PrmA family.

It localises to the cytoplasm. The catalysed reaction is L-lysyl-[protein] + 3 S-adenosyl-L-methionine = N(6),N(6),N(6)-trimethyl-L-lysyl-[protein] + 3 S-adenosyl-L-homocysteine + 3 H(+). In terms of biological role, methylates ribosomal protein L11. This is Ribosomal protein L11 methyltransferase from Synechococcus elongatus (strain ATCC 33912 / PCC 7942 / FACHB-805) (Anacystis nidulans R2).